Reading from the N-terminus, the 120-residue chain is Large ribosomal subunit protein uL22 (120 aa).

Positions 1-20 (MFVNRRYTARGKNLPSSPKK) are disordered.

The protein belongs to the universal ribosomal protein uL22 family. As to quaternary structure, part of the 50S ribosomal subunit.

Its function is as follows. This protein binds specifically to 23S rRNA; its binding is stimulated by other ribosomal proteins, e.g. L4, L17, and L20. It is important during the early stages of 50S assembly. It makes multiple contacts with different domains of the 23S rRNA in the assembled 50S subunit and ribosome. The globular domain of the protein is located near the polypeptide exit tunnel on the outside of the subunit, while an extended beta-hairpin is found that lines the wall of the exit tunnel in the center of the 70S ribosome. In Borrelia turicatae (strain 91E135), this protein is Large ribosomal subunit protein uL22.